The sequence spans 336 residues: Casein kinase II subunit alpha (336 aa).

In terms of domain architecture, Protein kinase spans 37-322 (YQLVRKLGRG…AREAMAHPYF (286 aa)). ATP is bound by residues 43–51 (LGRGKYSEV) and Lys-66. Asp-154 (proton acceptor) is an active-site residue.

This sequence belongs to the protein kinase superfamily. Ser/Thr protein kinase family. CK2 subfamily. Tetramer of two alpha and two beta chains. Requires Mg(2+) as cofactor.

The protein resides in the nucleus. Its subcellular location is the nucleolus. It carries out the reaction L-seryl-[protein] + ATP = O-phospho-L-seryl-[protein] + ADP + H(+). The enzyme catalyses L-threonyl-[protein] + ATP = O-phospho-L-threonyl-[protein] + ADP + H(+). Functionally, casein kinases are operationally defined by their preferential utilization of acidic proteins such as caseins as substrates. The alpha chain contains the catalytic site. May participate in Wnt signaling. The polypeptide is Casein kinase II subunit alpha (CkIIalpha) (Drosophila melanogaster (Fruit fly)).